Consider the following 213-residue polypeptide: Adenylate kinase (213 aa).

10–15 is a binding site for ATP; it reads GCGKGT. The segment at 30–59 is NMP; that stretch reads STGDLMRKEISLNTTLGLKCQEYMNAGKYV. AMP contacts are provided by residues T31, R36, 57–59, 83–86, and Q90; these read KYV and GYPR. The LID stretch occupies residues 124–161; that stretch reads NRLVCPLCKASFNLETRKPKQEGLCDFDNTKLVKRSDD. R125 is an ATP binding site. Zn(2+) contacts are provided by C128 and C131. 134 to 135 contributes to the ATP binding site; the sequence is SF. C148 and D151 together coordinate Zn(2+). AMP contacts are provided by R158 and R169. Residue N197 coordinates ATP.

It belongs to the adenylate kinase family. In terms of assembly, monomer.

Its subcellular location is the cytoplasm. The enzyme catalyses AMP + ATP = 2 ADP. The protein operates within purine metabolism; AMP biosynthesis via salvage pathway; AMP from ADP: step 1/1. In terms of biological role, catalyzes the reversible transfer of the terminal phosphate group between ATP and AMP. Plays an important role in cellular energy homeostasis and in adenine nucleotide metabolism. The polypeptide is Adenylate kinase (Mycoplasma capricolum subsp. capricolum (strain California kid / ATCC 27343 / NCTC 10154)).